Here is a 296-residue protein sequence, read N- to C-terminus: 33 kDa chaperonin (296 aa).

2 disulfides stabilise this stretch: Cys-238-Cys-240 and Cys-271-Cys-274.

Belongs to the HSP33 family. Under oxidizing conditions two disulfide bonds are formed involving the reactive cysteines. Under reducing conditions zinc is bound to the reactive cysteines and the protein is inactive.

It localises to the cytoplasm. Functionally, redox regulated molecular chaperone. Protects both thermally unfolding and oxidatively damaged proteins from irreversible aggregation. Plays an important role in the bacterial defense system toward oxidative stress. In Clostridium botulinum (strain Loch Maree / Type A3), this protein is 33 kDa chaperonin.